Here is a 436-residue protein sequence, read N- to C-terminus: Citrate synthase (436 aa).

Active-site residues include His-311 and Asp-370.

Belongs to the citrate synthase family.

The enzyme catalyses oxaloacetate + acetyl-CoA + H2O = citrate + CoA + H(+). The protein operates within carbohydrate metabolism; tricarboxylic acid cycle; isocitrate from oxaloacetate: step 1/2. This Rickettsia typhi (strain ATCC VR-144 / Wilmington) protein is Citrate synthase (gltA).